The sequence spans 801 residues: Elongation factor G, mitochondrial (801 aa).

Residues 1 to 24 (MRCPSLARLPHRAISGLTRLPVRL) constitute a mitochondrion transit peptide. A tr-type G domain is found at 99-386 (SRIRNIGIAA…GVIDYLPNPS (288 aa)). GTP contacts are provided by residues 108–115 (AHIDSGKT), 184–188 (DTPGH), and 238–241 (NKMD).

Belongs to the TRAFAC class translation factor GTPase superfamily. Classic translation factor GTPase family. EF-G/EF-2 subfamily.

It is found in the mitochondrion. It functions in the pathway protein biosynthesis; polypeptide chain elongation. Its function is as follows. Mitochondrial GTPase that catalyzes the GTP-dependent ribosomal translocation step during translation elongation. During this step, the ribosome changes from the pre-translocational (PRE) to the post-translocational (POST) state as the newly formed A-site-bound peptidyl-tRNA and P-site-bound deacylated tRNA move to the P and E sites, respectively. Catalyzes the coordinated movement of the two tRNA molecules, the mRNA and conformational changes in the ribosome. The polypeptide is Elongation factor G, mitochondrial (mef1) (Aspergillus clavatus (strain ATCC 1007 / CBS 513.65 / DSM 816 / NCTC 3887 / NRRL 1 / QM 1276 / 107)).